Here is a 1058-residue protein sequence, read N- to C-terminus: Carbamoyl phosphate synthase large chain (1058 aa).

Residues 1 to 401 (MPKRKDIQKI…SLLKACRSLE (401 aa)) are carboxyphosphate synthetic domain. ATP-binding residues include arginine 129, arginine 169, glycine 175, glycine 176, arginine 208, isoleucine 210, glutamate 215, glycine 241, isoleucine 242, histidine 243, glutamine 284, and glutamate 298. Positions 133 to 327 (KQLMQELDQP…IAKLAAKIAV (195 aa)) constitute an ATP-grasp 1 domain. The Mg(2+) site is built by glutamine 284, glutamate 298, and asparagine 300. Residues glutamine 284, glutamate 298, and asparagine 300 each contribute to the Mn(2+) site. Residues 402-546 (IGVCHNEMTS…YSTYELENES (145 aa)) are oligomerization domain. A carbamoyl phosphate synthetic domain region spans residues 547–929 (VQSNKESILV…ALYKAFEANN (383 aa)). An ATP-grasp 2 domain is found at 671 to 861 (EKALKELGIP…MAQIATKLIL (191 aa)). Positions 707, 746, 748, 752, 777, 778, 779, 780, 820, and 832 each coordinate ATP. Glutamine 820, glutamate 832, and asparagine 834 together coordinate Mg(2+). Mn(2+) contacts are provided by glutamine 820, glutamate 832, and asparagine 834. An MGS-like domain is found at 930–1058 (SHLSEFGQIV…ESRCFNIEAI (129 aa)). An allosteric domain region spans residues 930 to 1058 (SHLSEFGQIV…ESRCFNIEAI (129 aa)).

The protein belongs to the CarB family. Composed of two chains; the small (or glutamine) chain promotes the hydrolysis of glutamine to ammonia, which is used by the large (or ammonia) chain to synthesize carbamoyl phosphate. Tetramer of heterodimers (alpha,beta)4. It depends on Mg(2+) as a cofactor. Requires Mn(2+) as cofactor.

The catalysed reaction is hydrogencarbonate + L-glutamine + 2 ATP + H2O = carbamoyl phosphate + L-glutamate + 2 ADP + phosphate + 2 H(+). The enzyme catalyses hydrogencarbonate + NH4(+) + 2 ATP = carbamoyl phosphate + 2 ADP + phosphate + 2 H(+). Its pathway is amino-acid biosynthesis; L-arginine biosynthesis; carbamoyl phosphate from bicarbonate: step 1/1. The protein operates within pyrimidine metabolism; UMP biosynthesis via de novo pathway; (S)-dihydroorotate from bicarbonate: step 1/3. Functionally, large subunit of the glutamine-dependent carbamoyl phosphate synthetase (CPSase). CPSase catalyzes the formation of carbamoyl phosphate from the ammonia moiety of glutamine, carbonate, and phosphate donated by ATP, constituting the first step of 2 biosynthetic pathways, one leading to arginine and/or urea and the other to pyrimidine nucleotides. The large subunit (synthetase) binds the substrates ammonia (free or transferred from glutamine from the small subunit), hydrogencarbonate and ATP and carries out an ATP-coupled ligase reaction, activating hydrogencarbonate by forming carboxy phosphate which reacts with ammonia to form carbamoyl phosphate. The polypeptide is Carbamoyl phosphate synthase large chain (Streptococcus pyogenes serotype M3 (strain ATCC BAA-595 / MGAS315)).